Reading from the N-terminus, the 273-residue chain is SET domain-containing protein 9 (273 aa).

One can recognise an SET domain in the interval 96 to 269 (FSVAQATSSL…QGEELFSNYY (174 aa)). Residue Tyr-268 coordinates S-adenosyl-L-methionine.

Belongs to the class V-like SAM-binding methyltransferase superfamily.

This chain is SET domain-containing protein 9 (SETD9), found in Pongo abelii (Sumatran orangutan).